The sequence spans 243 residues: Venom nerve growth factor 2 (243 aa).

An N-terminal signal peptide occupies residues 1–18 (MSMLCYTLIIAFLIGIWA). A propeptide spanning residues 19-125 (APKSEDNVPL…TLNRNIRAKR (107 aa)) is cleaved from the precursor. The segment covering 47-66 (GLKTSRNTDQRHPAPKKAED) has biased composition (basic and acidic residues). Residues 47–67 (GLKTSRNTDQRHPAPKKAEDQ) form a disordered region. Intrachain disulfides connect Cys-139–Cys-204 and Cys-192–Cys-234. Asn-148 carries an N-linked (GlcNAc...) asparagine glycan.

It belongs to the NGF-beta family. Homodimer; non-covalently linked. In terms of tissue distribution, expressed by the venom gland.

The protein localises to the secreted. Functionally, nerve growth factor is important for the development and maintenance of the sympathetic and sensory nervous systems. It stimulates division and differentiation of sympathetic and embryonic sensory neurons as well as basal forebrain cholinergic neurons in the brain. Its relevance in the snake venom is not clear. However, it has been shown to inhibit metalloproteinase-dependent proteolysis of platelet glycoprotein Ib alpha, suggesting a metalloproteinase inhibition to prevent metalloprotease autodigestion and/or protection against prey proteases. Binds a lipid between the two protein chains in the homodimer. The lipid-bound form promotes histamine relase from mouse mast cells, contrary to the lipid-free form. This is Venom nerve growth factor 2 from Pseudonaja textilis (Eastern brown snake).